The sequence spans 384 residues: Conidiophore development protein hymA (384 aa).

Positions 362–374 (EPIEPSRSAREPS) are enriched in basic and acidic residues. Residues 362–384 (EPIEPSRSAREPSRSTANTTTVA) form a disordered region.

It belongs to the Mo25 family.

Its subcellular location is the cytoplasm. Functionally, required for conidiophore development. The protein is Conidiophore development protein hymA (hymA) of Emericella nidulans (strain FGSC A4 / ATCC 38163 / CBS 112.46 / NRRL 194 / M139) (Aspergillus nidulans).